Consider the following 395-residue polypeptide: uncharacterized protein (395 aa).

The stretch at Lys-182–Lys-238 forms a coiled coil.

This is an uncharacterized protein from Acanthamoeba polyphaga (Amoeba).